We begin with the raw amino-acid sequence, 228 residues long: Isoprenyl transferase (228 aa).

Residue D15 is part of the active site. Mg(2+) is bound at residue D15. Substrate is bound by residues 16-19, W20, R28, H32, and 60-62; these read GNGR and STE. The Proton acceptor role is filled by N63. Residues W64, R66, R176, and 182–184 contribute to the substrate site; that span reads RLS. Residue E195 participates in Mg(2+) binding.

It belongs to the UPP synthase family. In terms of assembly, homodimer. Requires Mg(2+) as cofactor.

In terms of biological role, catalyzes the condensation of isopentenyl diphosphate (IPP) with allylic pyrophosphates generating different type of terpenoids. The chain is Isoprenyl transferase from Wolinella succinogenes (strain ATCC 29543 / DSM 1740 / CCUG 13145 / JCM 31913 / LMG 7466 / NCTC 11488 / FDC 602W) (Vibrio succinogenes).